The sequence spans 507 residues: Glutamate--tRNA ligase (507 aa).

The 'HIGH' region motif lies at 14–24 (PSPTGPLHIGG). Residues 262–266 (KLSKR) carry the 'KMSKS' region motif. An ATP-binding site is contributed by K265.

The protein belongs to the class-I aminoacyl-tRNA synthetase family. Glutamate--tRNA ligase type 1 subfamily. As to quaternary structure, monomer.

It is found in the cytoplasm. It catalyses the reaction tRNA(Glu) + L-glutamate + ATP = L-glutamyl-tRNA(Glu) + AMP + diphosphate. Functionally, catalyzes the attachment of glutamate to tRNA(Glu) in a two-step reaction: glutamate is first activated by ATP to form Glu-AMP and then transferred to the acceptor end of tRNA(Glu). The protein is Glutamate--tRNA ligase of Porphyromonas gingivalis (strain ATCC 33277 / DSM 20709 / CIP 103683 / JCM 12257 / NCTC 11834 / 2561).